Here is an 86-residue protein sequence, read N- to C-terminus: Large ribosomal subunit protein bL27 (86 aa).

Residues 1–10 (MAQKKGGGST) show a composition bias toward gly residues. The segment at 1–21 (MAQKKGGGSTRNGRDSESKRL) is disordered.

This sequence belongs to the bacterial ribosomal protein bL27 family.

The polypeptide is Large ribosomal subunit protein bL27 (Bordetella petrii (strain ATCC BAA-461 / DSM 12804 / CCUG 43448)).